The sequence spans 100 residues: Small ribosomal subunit protein uS14c (100 aa).

Belongs to the universal ribosomal protein uS14 family. As to quaternary structure, part of the 30S ribosomal subunit.

Its subcellular location is the plastid. It localises to the chloroplast. Its function is as follows. Binds 16S rRNA, required for the assembly of 30S particles. In Gossypium barbadense (Sea Island cotton), this protein is Small ribosomal subunit protein uS14c.